The following is an 87-amino-acid chain: Tachykinin-1 (87 aa).

The first 22 residues, 1–22, serve as a signal peptide directing secretion; the sequence is MIRVGLILCCIFIAGVFEASSA. A propeptide spanning residues 23–37 is cleaved from the precursor; that stretch reads DDMLTAHNLIKRSEV. Methionine 49 carries the post-translational modification Methionine amide. Residues 52–87 constitute a propeptide that is removed on maturation; that stretch reads SEELTRRLIQHPGSMSETSKRGPPKKVSRRPYILKK. The segment at 61–87 is disordered; that stretch reads QHPGSMSETSKRGPPKKVSRRPYILKK. Over residues 73–87 the composition is skewed to basic residues; the sequence is GPPKKVSRRPYILKK.

It belongs to the tachykinin family. In terms of tissue distribution, expressed in the posterior salivary gland and more specifically in the mucus-secreting gland cells.

The protein localises to the secreted. Tachykinins are active peptides which excite neurons, evoke behavioral responses, are potent vasodilators and secretagogues, and contract (directly or indirectly) many smooth muscles. The protein is Tachykinin-1 of Octopus vulgaris (Common octopus).